Reading from the N-terminus, the 541-residue chain is Glycogen synthase (541 aa).

Residue lysine 17 participates in ADP-alpha-D-glucose binding. The tract at residues 497 to 541 (LARPASPPDTAPVGKPARRRRTTALSTTARAHPVARAAGREKIRA) is disordered.

The protein belongs to the glycosyltransferase 1 family. Bacterial/plant glycogen synthase subfamily.

It catalyses the reaction [(1-&gt;4)-alpha-D-glucosyl](n) + ADP-alpha-D-glucose = [(1-&gt;4)-alpha-D-glucosyl](n+1) + ADP + H(+). Its pathway is glycan biosynthesis; glycogen biosynthesis. Its function is as follows. Synthesizes alpha-1,4-glucan chains using ADP-glucose. The protein is Glycogen synthase of Ralstonia nicotianae (strain ATCC BAA-1114 / GMI1000) (Ralstonia solanacearum).